Here is a 135-residue protein sequence, read N- to C-terminus: Transcription antitermination protein NusB (135 aa).

The protein belongs to the NusB family.

In terms of biological role, involved in transcription antitermination. Required for transcription of ribosomal RNA (rRNA) genes. Binds specifically to the boxA antiterminator sequence of the ribosomal RNA (rrn) operons. This chain is Transcription antitermination protein NusB, found in Lacticaseibacillus casei (strain BL23) (Lactobacillus casei).